The sequence spans 82 residues: DNA-directed RNA polymerase subunit omega (82 aa).

The protein belongs to the RNA polymerase subunit omega family. The RNAP catalytic core consists of 2 alpha, 1 beta, 1 beta' and 1 omega subunit. When a sigma factor is associated with the core the holoenzyme is formed, which can initiate transcription.

The enzyme catalyses RNA(n) + a ribonucleoside 5'-triphosphate = RNA(n+1) + diphosphate. In terms of biological role, promotes RNA polymerase assembly. Latches the N- and C-terminal regions of the beta' subunit thereby facilitating its interaction with the beta and alpha subunits. This chain is DNA-directed RNA polymerase subunit omega, found in Lacticaseibacillus casei (strain BL23) (Lactobacillus casei).